The sequence spans 223 residues: UPF0441 protein YgiB (223 aa).

Residues 178-195 (TVPKTAMAPKPATTTTVT) show a composition bias toward low complexity. Positions 178–223 (TVPKTAMAPKPATTTTVTRGGFGESVAKQSTMQRSAAGTSTRSMGG) are disordered. Residues 204-223 (AKQSTMQRSAAGTSTRSMGG) are compositionally biased toward polar residues.

The protein belongs to the UPF0441 family.

The chain is UPF0441 protein YgiB from Salmonella paratyphi B (strain ATCC BAA-1250 / SPB7).